The following is a 357-amino-acid chain: Probable leucine aminopeptidase TRV_02148.1 (357 aa).

The N-terminal stretch at 1-15 (MKVLAALALSALAMA) is a signal peptide. An N-linked (GlcNAc...) asparagine glycan is attached at N76. Positions 167 and 185 each coordinate Zn(2+). The disordered stretch occupies residues 169 to 188 (DSINGKNPQGEAPGADDNGS). N186 carries an N-linked (GlcNAc...) asparagine glycan. 2 residues coordinate Zn(2+): E224 and D251. A glycan (N-linked (GlcNAc...) asparagine) is linked at N269. The cysteines at positions 291 and 295 are disulfide-linked. Position 324 (H324) interacts with Zn(2+).

It belongs to the peptidase M28 family. M28E subfamily. As to quaternary structure, monomer. Zn(2+) serves as cofactor.

It localises to the secreted. Its function is as follows. Probable extracellular aminopeptidase which contributes to pathogenicity. The chain is Probable leucine aminopeptidase TRV_02148.1 from Trichophyton verrucosum (strain HKI 0517).